The primary structure comprises 263 residues: Sulfur carrier protein FdhD (263 aa).

Cysteine 107 (cysteine persulfide intermediate) is an active-site residue.

The protein belongs to the FdhD family.

The protein resides in the cytoplasm. Its function is as follows. Required for formate dehydrogenase (FDH) activity. Acts as a sulfur carrier protein that transfers sulfur from IscS to the molybdenum cofactor prior to its insertion into FDH. This Bacillus licheniformis (strain ATCC 14580 / DSM 13 / JCM 2505 / CCUG 7422 / NBRC 12200 / NCIMB 9375 / NCTC 10341 / NRRL NRS-1264 / Gibson 46) protein is Sulfur carrier protein FdhD.